Here is a 232-residue protein sequence, read N- to C-terminus: Lipoprotein-releasing system ATP-binding protein LolD (232 aa).

The ABC transporter domain maps to 11-232 (IEVTDLQRAF…LHDGRLIEEY (222 aa)). 47–54 (GPSGAGKS) contributes to the ATP binding site.

The protein belongs to the ABC transporter superfamily. Lipoprotein translocase (TC 3.A.1.125) family. The complex is composed of two ATP-binding proteins (LolD) and two transmembrane proteins (LolC and LolE).

The protein resides in the cell inner membrane. Its function is as follows. Part of the ABC transporter complex LolCDE involved in the translocation of mature outer membrane-directed lipoproteins, from the inner membrane to the periplasmic chaperone, LolA. Responsible for the formation of the LolA-lipoprotein complex in an ATP-dependent manner. The sequence is that of Lipoprotein-releasing system ATP-binding protein LolD from Zymomonas mobilis subsp. mobilis (strain ATCC 10988 / DSM 424 / LMG 404 / NCIMB 8938 / NRRL B-806 / ZM1).